Consider the following 396-residue polypeptide: 1-deoxy-D-xylulose 5-phosphate reductoisomerase (396 aa).

NADPH contacts are provided by T13, G14, S15, I16, and N127. A 1-deoxy-D-xylulose 5-phosphate-binding site is contributed by K128. E129 serves as a coordination point for NADPH. D153 is a Mn(2+) binding site. 1-deoxy-D-xylulose 5-phosphate contacts are provided by S154, E155, S184, and H207. E155 provides a ligand contact to Mn(2+). G213 provides a ligand contact to NADPH. Residues S220, N225, K226, and E229 each contribute to the 1-deoxy-D-xylulose 5-phosphate site. E229 is a binding site for Mn(2+).

This sequence belongs to the DXR family. Mg(2+) serves as cofactor. Mn(2+) is required as a cofactor.

It carries out the reaction 2-C-methyl-D-erythritol 4-phosphate + NADP(+) = 1-deoxy-D-xylulose 5-phosphate + NADPH + H(+). Its pathway is isoprenoid biosynthesis; isopentenyl diphosphate biosynthesis via DXP pathway; isopentenyl diphosphate from 1-deoxy-D-xylulose 5-phosphate: step 1/6. In terms of biological role, catalyzes the NADPH-dependent rearrangement and reduction of 1-deoxy-D-xylulose-5-phosphate (DXP) to 2-C-methyl-D-erythritol 4-phosphate (MEP). The sequence is that of 1-deoxy-D-xylulose 5-phosphate reductoisomerase from Pseudomonas paraeruginosa (strain DSM 24068 / PA7) (Pseudomonas aeruginosa (strain PA7)).